The primary structure comprises 369 residues: DNA replication and repair protein RecF (369 aa).

30 to 37 (GRNAQGKT) provides a ligand contact to ATP.

The protein belongs to the RecF family.

The protein resides in the cytoplasm. Its function is as follows. The RecF protein is involved in DNA metabolism; it is required for DNA replication and normal SOS inducibility. RecF binds preferentially to single-stranded, linear DNA. It also seems to bind ATP. This is DNA replication and repair protein RecF from Streptococcus agalactiae serotype III (strain NEM316).